We begin with the raw amino-acid sequence, 245 residues long: Protein ARV 1 (245 aa).

5 helical membrane passes run 70 to 90 (INPA…AYLL), 117 to 137 (IKVL…FAIA), 163 to 183 (IFLL…FVDI), 200 to 220 (TMTR…LVGQ), and 224 to 244 (PTIF…FFRI).

This sequence belongs to the ARV1 family. In terms of tissue distribution, restricted to tissues in which cells are actively dividing or expanding. Mostly expressed in roots and flowers, and, to a lower extent, in stems and leaves.

It localises to the endoplasmic reticulum membrane. Its function is as follows. Mediator of sterol homeostasis involved in sterol uptake, trafficking and distribution into membranes. Also regulates the sphingolipid metabolism. This is Protein ARV 1 from Arabidopsis thaliana (Mouse-ear cress).